We begin with the raw amino-acid sequence, 106 residues long: uncharacterized protein (106 aa).

Its subcellular location is the mitochondrion. This is an uncharacterized protein from Arabidopsis thaliana (Mouse-ear cress).